The chain runs to 206 residues: Large ribosomal subunit protein bL25 (206 aa).

The protein belongs to the bacterial ribosomal protein bL25 family. CTC subfamily. Part of the 50S ribosomal subunit; part of the 5S rRNA/L5/L18/L25 subcomplex. Contacts the 5S rRNA. Binds to the 5S rRNA independently of L5 and L18.

Functionally, this is one of the proteins that binds to the 5S RNA in the ribosome where it forms part of the central protuberance. The sequence is that of Large ribosomal subunit protein bL25 from Ralstonia nicotianae (strain ATCC BAA-1114 / GMI1000) (Ralstonia solanacearum).